Reading from the N-terminus, the 450-residue chain is MLSFLWDLASFIVALGVLITVHEFGHFWVARRCGVRVERFSIGFGKALWRRTDKLGTEYVIALIPLGGYVKMLDERAEPVVPELRHHAFNNKSVGQRAAIIAAGPVANFIFAIFAYWLVFIIGVPGVRPVVGEIAANSIAAEAQIAPGTELKAVDGIETPDWDAVRLQLVDKIGDESTTITVAPFGSDQRRDVKLDLRHWAFEPDKEDPVSSLGIRPRGPQIEPVLENVQPNSAASKAGLQAGDRIVKVDGQPLTQWVTFVMLVRDNPGKSLALEIERQGSPLSLTLIPESKPGNGKAIGFVGIEPKVIPLPDEYKVVRQYGPFNAIVEATDKTWQLMKLTVSMLGKLITGDVKLNNLSGPISIAKGAGMTAELGVVYYLPFLALISVNLGIINLFPLPVLDGGHLLFLAIEKIKGGPVSERVQDFCYRIGSILLVLLMGLALFNDFSRL.

Residues 1 to 21 (MLSFLWDLASFIVALGVLITV) form a helical membrane-spanning segment. Histidine 22 is a Zn(2+) binding site. The Periplasmic segment spans residues 22-103 (HEFGHFWVAR…VGQRAAIIAA (82 aa)). Glutamate 23 is an active-site residue. Histidine 26 lines the Zn(2+) pocket. A helical membrane pass occupies residues 104–124 (GPVANFIFAIFAYWLVFIIGV). Residues 125–375 (PGVRPVVGEI…KGAGMTAELG (251 aa)) are Cytoplasmic-facing. 2 PDZ domains span residues 127–220 (VRPV…PRGP) and 222–309 (IEPV…PKVI). Residues 376 to 396 (VVYYLPFLALISVNLGIINLF) traverse the membrane as a helical segment. The Periplasmic segment spans residues 397–429 (PLPVLDGGHLLFLAIEKIKGGPVSERVQDFCYR). Residues 430–450 (IGSILLVLLMGLALFNDFSRL) traverse the membrane as a helical segment.

The protein belongs to the peptidase M50B family. As to quaternary structure, interacts with RseA; the third transmembrane domain can be cross-linked to the transmembrane domain of RseA. It depends on Zn(2+) as a cofactor.

The protein resides in the cell inner membrane. Its activity is regulated as follows. Inhibited by Zn(2+) chelator 1,10-phenanthroline. Its function is as follows. A site-2 regulated intramembrane protease (S2P) that cleaves the peptide bond between 'Ala-108' and 'Cys-109' in the transmembrane region of RseA. Part of a regulated intramembrane proteolysis (RIP) cascade. Acts on DegS-cleaved RseA to release the cytoplasmic domain of RseA, residue 'Val-148' of RseA may be required for this. This provides the cell with sigma-E (RpoE) activity through the proteolysis of RseA. Can also cleave sequences in transmembrane regions of other proteins (such as LacY) as well as liberated signal peptides of beta-lactamase, OmpF, LivK, SecM, PhoA, LivJ, OmpC, Lpp and TorA, probably within the membrane. Cleaves FecR within its transmembrane region to release an N-terminal cytoplasmic fragment which binds to sigma factor FecI, allowing it to activate transcription of the fecABCDE operon which mediates ferric citrate transport. The chain is Regulator of sigma-E protease RseP (rseP) from Escherichia coli (strain K12).